Consider the following 305-residue polypeptide: Protein MFI (305 aa).

In terms of assembly, can homodimerize. Interacts with MFF; the interaction inhibits MFF interaction with DNM1L.

Its subcellular location is the cytoplasm. The protein localises to the cytosol. The protein resides in the mitochondrion outer membrane. Functionally, acts as an inhibitor of mitochondrial fission. Interacts with MFF and prevents DNM1L recruitment to mitochondria, promoting a more fused mitochondrial network. This Rattus norvegicus (Rat) protein is Protein MFI.